Reading from the N-terminus, the 151-residue chain is Ribosome maturation factor RimP (151 aa).

Belongs to the RimP family.

The protein resides in the cytoplasm. In terms of biological role, required for maturation of 30S ribosomal subunits. The polypeptide is Ribosome maturation factor RimP (Crocosphaera subtropica (strain ATCC 51142 / BH68) (Cyanothece sp. (strain ATCC 51142))).